The primary structure comprises 406 residues: Probable sphingosine-1-phosphate phosphatase (406 aa).

The next 2 helical transmembrane spans lie at 66 to 86 (ILGE…CVAT) and 92 to 112 (LCVV…TFTL). A phosphatase sequence motif I region spans residues 107–115 (KNTFTLPRP). Residues 133 to 136 (PSTH) form a phosphatase sequence motif II region. The Proton donor role is filled by His-136. 2 helical membrane-spanning segments follow: residues 138–158 (ASAF…FPTI) and 162–182 (FNIS…SVMF). The tract at residues 183–194 (SRLYNGHHTPMD) is phosphatase sequence motif III. His-190 (nucleophile) is an active-site residue. Transmembrane regions (helical) follow at residues 193-213 (MDVI…TYQL), 225-245 (TFLF…FFHP), 254-274 (AYPE…SLWL), 313-333 (ILIG…FFFF), and 374-394 (LFVY…FYYL).

Belongs to the type 2 lipid phosphate phosphatase family.

The protein localises to the endoplasmic reticulum membrane. Functionally, has enzymatic activity against both sphingosine 1 phosphate (S1P) and dihydro-S1P. Regulates intracellular and extracellular S1P levels. The sequence is that of Probable sphingosine-1-phosphate phosphatase (sppA) from Dictyostelium discoideum (Social amoeba).